The primary structure comprises 352 residues: 3-isopropylmalate dehydrogenase (352 aa).

Residues Arg-91, Arg-101, Arg-129, and Asp-218 each coordinate substrate. Residues Asp-218, Asp-242, and Asp-246 each contribute to the Mg(2+) site. 281–293 (GSAPDIAGKGLAN) is a binding site for NAD(+).

This sequence belongs to the isocitrate and isopropylmalate dehydrogenases family. LeuB type 1 subfamily. As to quaternary structure, homodimer. Mg(2+) is required as a cofactor. Mn(2+) serves as cofactor.

It localises to the cytoplasm. It catalyses the reaction (2R,3S)-3-isopropylmalate + NAD(+) = 4-methyl-2-oxopentanoate + CO2 + NADH. The protein operates within amino-acid biosynthesis; L-leucine biosynthesis; L-leucine from 3-methyl-2-oxobutanoate: step 3/4. Functionally, catalyzes the oxidation of 3-carboxy-2-hydroxy-4-methylpentanoate (3-isopropylmalate) to 3-carboxy-4-methyl-2-oxopentanoate. The product decarboxylates to 4-methyl-2 oxopentanoate. This chain is 3-isopropylmalate dehydrogenase, found in Novosphingobium aromaticivorans (strain ATCC 700278 / DSM 12444 / CCUG 56034 / CIP 105152 / NBRC 16084 / F199).